We begin with the raw amino-acid sequence, 1430 residues long: Gag-Pol polyprotein (1430 aa).

The N-myristoyl glycine; by host moiety is linked to residue Gly-2. The tract at residues 7–31 (VLSGGKLDAWEKIRLRPGGKKKYRL) is interaction with Gp41. The interaction with host CALM1 stretch occupies residues 8–43 (LSGGKLDAWEKIRLRPGGKKKYRLKHLVWASRELER). Residues 12 to 19 (KLDAWEKI) form an interaction with host AP3D1 region. Positions 14–33 (DAWEKIRLRPGGKKKYRLKH) are interaction with membrane phosphatidylinositol 4,5-bisphosphate and RNA. Residues 16 to 22 (WEKIRLR) carry the Nuclear export signal motif. The short motif at 26–32 (KKKYRLK) is the Nuclear localization signal element. Residues 73–77 (EELKS) are interaction with membrane phosphatidylinositol 4,5-bisphosphate. At Tyr-128 the chain carries Phosphotyrosine; by host. The interaction with human PPIA/CYPA and NUP153 stretch occupies residues 185–223 (NTVGGHQAAMQMLKDTINEEAAEWDRLHPTQAGPIPPGQ). The segment at 273–359 (YSPVGILDIR…GGPSHKARVL (87 aa)) is dimerization/Multimerization of capsid protein p24. CCHC-type zinc fingers lie at residues 385–402 (VKCF…NCRA) and 406–423 (KGCW…DCTE). The disordered stretch occupies residues 451–474 (VSPASRELQVRGGDNPISEAGAER). The segment at 484–488 (PQITL) is dimerization of protease. Residues 503–572 (KEALLDTGAD…TPVNIIGRNM (70 aa)) form the Peptidase A2 domain. Asp-508 (for protease activity; shared with dimeric partner) is an active-site residue. Dimerization of protease regions lie at residues 532-538 (GIGGFIK) and 571-583 (NMLT…LHFP). Residues 626 to 816 (EGKISKIGPE…PPFLWMGYEL (191 aa)) form the Reverse transcriptase domain. Mg(2+)-binding residues include Asp-692, Asp-767, and Asp-768. Positions 809–817 (FLWMGYELH) are RT 'primer grip'. The Tryptophan repeat motif signature appears at 980–996 (WDTWWTEYWQATWIPEW). The RNase H type-1 domain occupies 1016 to 1139 (IVGAETFYVD…VDKLVSAGIR (124 aa)). Asp-1025, Glu-1060, Asp-1080, and Asp-1131 together coordinate Mg(2+). The Integrase-type zinc-finger motif lies at 1145–1186 (DGIDKAQEEHEKYHNNWRAMASDFNIPAVVAKEIVASCDKCQ). Zn(2+)-binding residues include His-1154, His-1158, Cys-1182, and Cys-1185. Residues 1196–1346 (VDCSPGIWQL…SAGERTIDII (151 aa)) enclose the Integrase catalytic domain. Mg(2+) is bound by residues Asp-1206, Asp-1258, and Glu-1294. Residues 1365–1412 (FRVYYRDSRDPVWKGPAKLLWKGEGAVVIQDNSEIKVVPRRKAKIIRD) constitute a DNA-binding region (integrase-type).

In terms of assembly, homotrimer; further assembles as hexamers of trimers. Interacts with gp41 (via C-terminus). Interacts with host CALM1; this interaction induces a conformational change in the Matrix protein, triggering exposure of the myristate group. Interacts with host AP3D1; this interaction allows the polyprotein trafficking to multivesicular bodies during virus assembly. Part of the pre-integration complex (PIC) which is composed of viral genome, matrix protein, Vpr and integrase. Homodimer; the homodimer further multimerizes as homohexamers or homopentamers. Interacts with human PPIA/CYPA; This interaction stabilizes the capsid. Interacts with human NUP153. Interacts with host PDZD8; this interaction stabilizes the capsid. Interacts with monkey TRIM5; this interaction destabilizes the capsid. As to quaternary structure, homodimer, whose active site consists of two apposed aspartic acid residues. In terms of assembly, heterodimer of p66 RT and p51 RT (RT p66/p51). Heterodimerization of RT is essential for DNA polymerase activity. The overall folding of the subdomains is similar in p66 RT and p51 RT but the spatial arrangements of the subdomains are dramatically different. Homotetramer; may further associate as a homohexadecamer. Part of the pre-integration complex (PIC) which is composed of viral genome, matrix protein, Vpr and integrase. Interacts with human SMARCB1/INI1 and human PSIP1/LEDGF isoform 1. Interacts with human KPNA3; this interaction might play a role in nuclear import of the pre-integration complex. Interacts with human NUP153; this interaction might play a role in nuclear import of the pre-integration complex. The cofactor is Mg(2+). In terms of processing, specific enzymatic cleavages by the viral protease yield mature proteins. The protease is released by autocatalytic cleavage. The polyprotein is cleaved during and after budding, this process is termed maturation. Proteolytic cleavage of p66 RT removes the RNase H domain to yield the p51 RT subunit. Nucleocapsid protein p7 might be further cleaved after virus entry. Tyrosine phosphorylated presumably in the virion by a host kinase. Phosphorylation is apparently not a major regulator of membrane association. Post-translationally, phosphorylated possibly by host MAPK1; this phosphorylation is necessary for Pin1-mediated virion uncoating. In terms of processing, methylated by host PRMT6, impairing its function by reducing RNA annealing and the initiation of reverse transcription.

Its subcellular location is the host cell membrane. It localises to the host endosome. It is found in the host multivesicular body. The protein resides in the virion membrane. The protein localises to the host nucleus. Its subcellular location is the host cytoplasm. It localises to the virion. It carries out the reaction Specific for a P1 residue that is hydrophobic, and P1' variable, but often Pro.. It catalyses the reaction Endohydrolysis of RNA in RNA/DNA hybrids. Three different cleavage modes: 1. sequence-specific internal cleavage of RNA. Human immunodeficiency virus type 1 and Moloney murine leukemia virus enzymes prefer to cleave the RNA strand one nucleotide away from the RNA-DNA junction. 2. RNA 5'-end directed cleavage 13-19 nucleotides from the RNA end. 3. DNA 3'-end directed cleavage 15-20 nucleotides away from the primer terminus.. The enzyme catalyses 3'-end directed exonucleolytic cleavage of viral RNA-DNA hybrid.. The catalysed reaction is DNA(n) + a 2'-deoxyribonucleoside 5'-triphosphate = DNA(n+1) + diphosphate. Its activity is regulated as follows. Protease: The viral protease is inhibited by many synthetic protease inhibitors (PIs), such as amprenavir, atazanavir, indinavir, loprinavir, nelfinavir, ritonavir and saquinavir. Use of protease inhibitors in tritherapy regimens permit more ambitious therapeutic strategies. Reverse transcriptase/ribonuclease H: RT can be inhibited either by nucleoside RT inhibitors (NRTIs) or by non nucleoside RT inhibitors (NNRTIs). NRTIs act as chain terminators, whereas NNRTIs inhibit DNA polymerization by binding a small hydrophobic pocket near the RT active site and inducing an allosteric change in this region. Classical NRTIs are abacavir, adefovir (PMEA), didanosine (ddI), lamivudine (3TC), stavudine (d4T), tenofovir (PMPA), zalcitabine (ddC), and zidovudine (AZT). Classical NNRTIs are atevirdine (BHAP U-87201E), delavirdine, efavirenz (DMP-266), emivirine (I-EBU), and nevirapine (BI-RG-587). The tritherapies used as a basic effective treatment of AIDS associate two NRTIs and one NNRTI. Functionally, mediates, with Gag polyprotein, the essential events in virion assembly, including binding the plasma membrane, making the protein-protein interactions necessary to create spherical particles, recruiting the viral Env proteins, and packaging the genomic RNA via direct interactions with the RNA packaging sequence (Psi). Gag-Pol polyprotein may regulate its own translation, by the binding genomic RNA in the 5'-UTR. At low concentration, the polyprotein would promote translation, whereas at high concentration, the polyprotein would encapsidate genomic RNA and then shut off translation. Targets the polyprotein to the plasma membrane via a multipartite membrane-binding signal, that includes its myristoylated N-terminus. Matrix protein is part of the pre-integration complex. Implicated in the release from host cell mediated by Vpu. Binds to RNA. In terms of biological role, forms the conical core that encapsulates the genomic RNA-nucleocapsid complex in the virion. Most core are conical, with only 7% tubular. The core is constituted by capsid protein hexamer subunits. The core is disassembled soon after virion entry. Host restriction factors such as TRIM5-alpha or TRIMCyp bind retroviral capsids and cause premature capsid disassembly, leading to blocks in reverse transcription. Capsid restriction by TRIM5 is one of the factors which restricts HIV-1 to the human species. Host PIN1 apparently facilitates the virion uncoating. On the other hand, interactions with PDZD8 or CYPA stabilize the capsid. Its function is as follows. Encapsulates and protects viral dimeric unspliced genomic RNA (gRNA). Binds these RNAs through its zinc fingers. Acts as a nucleic acid chaperone which is involved in rearangement of nucleic acid secondary structure during gRNA retrotranscription. Also facilitates template switch leading to recombination. As part of the polyprotein, participates in gRNA dimerization, packaging, tRNA incorporation and virion assembly. Functionally, aspartyl protease that mediates proteolytic cleavages of Gag and Gag-Pol polyproteins during or shortly after the release of the virion from the plasma membrane. Cleavages take place as an ordered, step-wise cascade to yield mature proteins. This process is called maturation. Displays maximal activity during the budding process just prior to particle release from the cell. Also cleaves Nef and Vif, probably concomitantly with viral structural proteins on maturation of virus particles. Hydrolyzes host EIF4GI and PABP1 in order to shut off the capped cellular mRNA translation. The resulting inhibition of cellular protein synthesis serves to ensure maximal viral gene expression and to evade host immune response. Also mediates cleavage of host YTHDF3. Mediates cleavage of host CARD8, thereby activating the CARD8 inflammasome, leading to the clearance of latent HIV-1 in patient CD4(+) T-cells after viral reactivation; in contrast, HIV-1 can evade CARD8-sensing when its protease remains inactive in infected cells prior to viral budding. Multifunctional enzyme that converts the viral RNA genome into dsDNA in the cytoplasm, shortly after virus entry into the cell. This enzyme displays a DNA polymerase activity that can copy either DNA or RNA templates, and a ribonuclease H (RNase H) activity that cleaves the RNA strand of RNA-DNA heteroduplexes in a partially processive 3' to 5' endonucleasic mode. Conversion of viral genomic RNA into dsDNA requires many steps. A tRNA(3)-Lys binds to the primer-binding site (PBS) situated at the 5'-end of the viral RNA. RT uses the 3' end of the tRNA primer to perform a short round of RNA-dependent minus-strand DNA synthesis. The reading proceeds through the U5 region and ends after the repeated (R) region which is present at both ends of viral RNA. The portion of the RNA-DNA heteroduplex is digested by the RNase H, resulting in a ssDNA product attached to the tRNA primer. This ssDNA/tRNA hybridizes with the identical R region situated at the 3' end of viral RNA. This template exchange, known as minus-strand DNA strong stop transfer, can be either intra- or intermolecular. RT uses the 3' end of this newly synthesized short ssDNA to perform the RNA-dependent minus-strand DNA synthesis of the whole template. RNase H digests the RNA template except for two polypurine tracts (PPTs) situated at the 5'-end and near the center of the genome. It is not clear if both polymerase and RNase H activities are simultaneous. RNase H probably can proceed both in a polymerase-dependent (RNA cut into small fragments by the same RT performing DNA synthesis) and a polymerase-independent mode (cleavage of remaining RNA fragments by free RTs). Secondly, RT performs DNA-directed plus-strand DNA synthesis using the PPTs that have not been removed by RNase H as primers. PPTs and tRNA primers are then removed by RNase H. The 3' and 5' ssDNA PBS regions hybridize to form a circular dsDNA intermediate. Strand displacement synthesis by RT to the PBS and PPT ends produces a blunt ended, linear dsDNA copy of the viral genome that includes long terminal repeats (LTRs) at both ends. In terms of biological role, integrase catalyzes viral DNA integration into the host chromosome, by performing a series of DNA cutting and joining reactions. This enzyme activity takes place after virion entry into a cell and reverse transcription of the RNA genome in dsDNA. The first step in the integration process is 3' processing. This step requires a complex comprising the viral genome, matrix protein, Vpr and integrase. This complex is called the pre-integration complex (PIC). The integrase protein removes 2 nucleotides from each 3' end of the viral DNA, leaving recessed CA OH's at the 3' ends. In the second step, the PIC enters cell nucleus. This process is mediated through integrase and Vpr proteins, and allows the virus to infect a non dividing cell. This ability to enter the nucleus is specific of lentiviruses, other retroviruses cannot and rely on cell division to access cell chromosomes. In the third step, termed strand transfer, the integrase protein joins the previously processed 3' ends to the 5' ends of strands of target cellular DNA at the site of integration. The 5'-ends are produced by integrase-catalyzed staggered cuts, 5 bp apart. A Y-shaped, gapped, recombination intermediate results, with the 5'-ends of the viral DNA strands and the 3' ends of target DNA strands remaining unjoined, flanking a gap of 5 bp. The last step is viral DNA integration into host chromosome. This involves host DNA repair synthesis in which the 5 bp gaps between the unjoined strands are filled in and then ligated. Since this process occurs at both cuts flanking the HIV genome, a 5 bp duplication of host DNA is produced at the ends of HIV-1 integration. Alternatively, Integrase may catalyze the excision of viral DNA just after strand transfer, this is termed disintegration. The chain is Gag-Pol polyprotein (gag-pol) from Homo sapiens (Human).